Reading from the N-terminus, the 426-residue chain is Phosphoribosylamine--glycine ligase (426 aa).

The region spanning 113–320 (KSLMTEAKIP…LLELLYRAST (208 aa)) is the ATP-grasp domain. ATP is bound at residue 139–200 (LESKSIPIVI…EEFMEGQEAS (62 aa)). Positions 290 and 292 each coordinate Mg(2+).

The protein belongs to the GARS family. It depends on Mg(2+) as a cofactor. Requires Mn(2+) as cofactor.

It carries out the reaction 5-phospho-beta-D-ribosylamine + glycine + ATP = N(1)-(5-phospho-beta-D-ribosyl)glycinamide + ADP + phosphate + H(+). It functions in the pathway purine metabolism; IMP biosynthesis via de novo pathway; N(1)-(5-phospho-D-ribosyl)glycinamide from 5-phospho-alpha-D-ribose 1-diphosphate: step 2/2. In Leptospira interrogans serogroup Icterohaemorrhagiae serovar copenhageni (strain Fiocruz L1-130), this protein is Phosphoribosylamine--glycine ligase.